The chain runs to 186 residues: uncharacterized protein (186 aa).

The disordered stretch occupies residues 121–146; it reads TSPLLKKNKPSSDQDDTSKQSFDQDE.

Belongs to the chlamydial CPn_0422/CT_273/TC_0545 family.

This is an uncharacterized protein from Chlamydia muridarum (strain MoPn / Nigg).